A 322-amino-acid polypeptide reads, in one-letter code: Homoserine kinase (322 aa).

106–116 contacts ATP; the sequence is ALSSGMGGSAA.

It belongs to the GHMP kinase family. Homoserine kinase subfamily.

Its subcellular location is the cytoplasm. The catalysed reaction is L-homoserine + ATP = O-phospho-L-homoserine + ADP + H(+). The protein operates within amino-acid biosynthesis; L-threonine biosynthesis; L-threonine from L-aspartate: step 4/5. In terms of biological role, catalyzes the ATP-dependent phosphorylation of L-homoserine to L-homoserine phosphate. This Xanthomonas campestris pv. campestris (strain B100) protein is Homoserine kinase.